The following is a 244-amino-acid chain: Type III pantothenate kinase (244 aa).

ATP is bound at residue 9 to 16; it reads DAGNSSLK. Substrate is bound by residues tyrosine 90 and 97–100; that span reads GVDR. Catalysis depends on aspartate 99, which acts as the Proton acceptor. Position 122 (threonine 122) interacts with ATP. A substrate-binding site is contributed by threonine 172.

It belongs to the type III pantothenate kinase family. Homodimer. NH4(+) is required as a cofactor. The cofactor is K(+).

The protein resides in the cytoplasm. It carries out the reaction (R)-pantothenate + ATP = (R)-4'-phosphopantothenate + ADP + H(+). The protein operates within cofactor biosynthesis; coenzyme A biosynthesis; CoA from (R)-pantothenate: step 1/5. Catalyzes the phosphorylation of pantothenate (Pan), the first step in CoA biosynthesis. The sequence is that of Type III pantothenate kinase from Thiobacillus denitrificans (strain ATCC 25259 / T1).